The sequence spans 445 residues: Glutamyl-tRNA(Gln) amidotransferase subunit D (445 aa).

The Asparaginase/glutaminase domain maps to 93–425 (SEIKIISTGG…EKIRSLMISN (333 aa)). Catalysis depends on residues threonine 103, threonine 179, aspartate 180, and lysine 258.

Belongs to the asparaginase 1 family. GatD subfamily. Heterodimer of GatD and GatE.

The catalysed reaction is L-glutamyl-tRNA(Gln) + L-glutamine + ATP + H2O = L-glutaminyl-tRNA(Gln) + L-glutamate + ADP + phosphate + H(+). Allows the formation of correctly charged Gln-tRNA(Gln) through the transamidation of misacylated Glu-tRNA(Gln) in organisms which lack glutaminyl-tRNA synthetase. The reaction takes place in the presence of glutamine and ATP through an activated gamma-phospho-Glu-tRNA(Gln). The GatDE system is specific for glutamate and does not act on aspartate. The sequence is that of Glutamyl-tRNA(Gln) amidotransferase subunit D from Saccharolobus islandicus (strain Y.N.15.51 / Yellowstone #2) (Sulfolobus islandicus).